The primary structure comprises 444 residues: Coagulation factor VII (444 aa).

Residues 1 to 21 (MAPQARGLGLCSLLALQASLA) form the signal peptide. Positions 22 to 39 (AVFITQEEAHSVLRRQRR) are excised as a propeptide. Residues 40 to 84 (ANSFLEELRPGSLERECKEELCSFEEAREVFQSTERTKQFWITYN) enclose the Gla domain. 4-carboxyglutamate is present on residues glutamate 45, glutamate 46, glutamate 53, glutamate 55, glutamate 58, glutamate 59, glutamate 64, glutamate 65, glutamate 68, and glutamate 74. A disulfide bridge connects residues cysteine 56 and cysteine 61. The EGF-like 1; calcium-binding domain maps to 85–121 (DGDQCASNPCQNGGSCEDQIQSYICFCLADFEGRNCE). Intrachain disulfides connect cysteine 89-cysteine 100, cysteine 94-cysteine 109, cysteine 111-cysteine 120, cysteine 130-cysteine 141, cysteine 137-cysteine 151, cysteine 153-cysteine 166, cysteine 174-cysteine 301, cysteine 198-cysteine 203, and cysteine 217-cysteine 233. Serine 91 carries O-linked (Glc...) serine; alternate glycosylation. Residue serine 91 is glycosylated (O-linked (Xyl...) serine; alternate). A glycan (O-linked (Fuc) serine) is linked at serine 99. Aspartate 102 carries the post-translational modification (3R)-3-hydroxyaspartate. The EGF-like 2 domain occupies 126-167 (DQLICMYENGGCEQYCSDHVGSQRSCRCHEGYTLLPNGVSCT). Residues 192–431 (IVGGKVCPKG…YTEWLSRLMR (240 aa)) form the Peptidase S1 domain. Residue asparagine 211 is glycosylated (N-linked (GlcNAc...) asparagine). Residue histidine 232 is the Charge relay system of the active site. N-linked (GlcNAc...) asparagine glycosylation is present at asparagine 242. The Charge relay system role is filled by aspartate 281. N-linked (GlcNAc...) asparagine glycosylation is present at asparagine 306. An intrachain disulfide couples cysteine 349 to cysteine 368. Aspartate 377 provides a ligand contact to substrate. Cysteine 379 and cysteine 407 are disulfide-bonded. The active-site Charge relay system is serine 383.

Belongs to the peptidase S1 family. Heterodimer of a light chain and a heavy chain linked by a disulfide bond. In terms of processing, the vitamin K-dependent, enzymatic carboxylation of some glutamate residues allows the modified protein to bind calcium. The iron and 2-oxoglutarate dependent 3-hydroxylation of aspartate and asparagine is (R) stereospecific within EGF domains. Post-translationally, O-glycosylated. O-fucosylated by POFUT1 on a conserved serine or threonine residue found in the consensus sequence C2-X(4,5)-[S/T]-C3 of EGF domains, where C2 and C3 are the second and third conserved cysteines. In terms of processing, can be either O-glucosylated or O-xylosylated at Ser-91 by POGLUT1. Plasma.

It localises to the secreted. The catalysed reaction is Selective cleavage of Arg-|-Ile bond in factor X to form factor Xa.. Initiates the extrinsic pathway of blood coagulation. Serine protease that circulates in the blood in a zymogen form. Factor VII is converted to factor VIIa by factor Xa, factor XIIa, factor IXa, or thrombin by minor proteolysis. In the presence of tissue factor and calcium ions, factor VIIa then converts factor X to factor Xa by limited proteolysis. Factor VIIa also converts factor IX to factor IXa in the presence of tissue factor and calcium. The sequence is that of Coagulation factor VII (F7) from Oryctolagus cuniculus (Rabbit).